The primary structure comprises 319 residues: Acetyl-coenzyme A carboxylase carboxyl transferase subunit alpha (319 aa).

Residues 39–293 (RLQKKSNDLT…KAVLEKQLHE (255 aa)) form the CoA carboxyltransferase C-terminal domain.

This sequence belongs to the AccA family. As to quaternary structure, acetyl-CoA carboxylase is a heterohexamer composed of biotin carboxyl carrier protein (AccB), biotin carboxylase (AccC) and two subunits each of ACCase subunit alpha (AccA) and ACCase subunit beta (AccD).

The protein resides in the cytoplasm. It carries out the reaction N(6)-carboxybiotinyl-L-lysyl-[protein] + acetyl-CoA = N(6)-biotinyl-L-lysyl-[protein] + malonyl-CoA. Its pathway is lipid metabolism; malonyl-CoA biosynthesis; malonyl-CoA from acetyl-CoA: step 1/1. In terms of biological role, component of the acetyl coenzyme A carboxylase (ACC) complex. First, biotin carboxylase catalyzes the carboxylation of biotin on its carrier protein (BCCP) and then the CO(2) group is transferred by the carboxyltransferase to acetyl-CoA to form malonyl-CoA. The chain is Acetyl-coenzyme A carboxylase carboxyl transferase subunit alpha from Neisseria meningitidis serogroup C (strain 053442).